The primary structure comprises 438 residues: Methylenetetrahydrofolate--tRNA-(uracil-5-)-methyltransferase TrmFO (438 aa).

Position 10-15 (10-15) interacts with FAD; sequence GGGLAG.

This sequence belongs to the MnmG family. TrmFO subfamily. It depends on FAD as a cofactor.

It localises to the cytoplasm. It carries out the reaction uridine(54) in tRNA + (6R)-5,10-methylene-5,6,7,8-tetrahydrofolate + NADH + H(+) = 5-methyluridine(54) in tRNA + (6S)-5,6,7,8-tetrahydrofolate + NAD(+). It catalyses the reaction uridine(54) in tRNA + (6R)-5,10-methylene-5,6,7,8-tetrahydrofolate + NADPH + H(+) = 5-methyluridine(54) in tRNA + (6S)-5,6,7,8-tetrahydrofolate + NADP(+). In terms of biological role, catalyzes the folate-dependent formation of 5-methyl-uridine at position 54 (M-5-U54) in all tRNAs. This Trichormus variabilis (strain ATCC 29413 / PCC 7937) (Anabaena variabilis) protein is Methylenetetrahydrofolate--tRNA-(uracil-5-)-methyltransferase TrmFO.